We begin with the raw amino-acid sequence, 34 residues long: Cytochrome b6-f complex subunit 5 (34 aa).

A helical transmembrane segment spans residues 5–25 (LLSGIVLGLVPVTLAGLFVTA).

The protein belongs to the PetG family. The 4 large subunits of the cytochrome b6-f complex are cytochrome b6, subunit IV (17 kDa polypeptide, PetD), cytochrome f and the Rieske protein, while the 4 small subunits are PetG, PetL, PetM and PetN. The complex functions as a dimer.

It localises to the plastid. The protein localises to the chloroplast thylakoid membrane. Its function is as follows. Component of the cytochrome b6-f complex, which mediates electron transfer between photosystem II (PSII) and photosystem I (PSI), cyclic electron flow around PSI, and state transitions. PetG is required for either the stability or assembly of the cytochrome b6-f complex. In Oltmannsiellopsis viridis (Marine flagellate), this protein is Cytochrome b6-f complex subunit 5.